A 208-amino-acid polypeptide reads, in one-letter code: Thymidylate kinase (208 aa).

13–20 (GLEGAGKS) contacts ATP.

This sequence belongs to the thymidylate kinase family.

It carries out the reaction dTMP + ATP = dTDP + ADP. In terms of biological role, phosphorylation of dTMP to form dTDP in both de novo and salvage pathways of dTTP synthesis. The protein is Thymidylate kinase of Shewanella amazonensis (strain ATCC BAA-1098 / SB2B).